Here is an 880-residue protein sequence, read N- to C-terminus: 3-isopropylmalate dehydratase large subunit gloJ (880 aa).

[4Fe-4S] cluster is bound by residues Cys-457, Cys-520, and Cys-523.

It belongs to the aconitase/IPM isomerase family. LeuC type 2 subfamily. [4Fe-4S] cluster is required as a cofactor.

The enzyme catalyses (2R,3S)-3-isopropylmalate = (2S)-2-isopropylmalate. It functions in the pathway mycotoxin biosynthesis. In terms of biological role, 3-isopropylmalate dehydratase large subunit; part of the gene cluster that mediates the biosynthesis of pneumocandins, lipohexapeptides of the echinocandin family that prevent fungal cell wall formation by non-competitive inhibition of beta-1,3-glucan synthase. The 10,12-dimethylmyristoyl side chain is synthesized by the reducing polyketide synthase gloL/GLPKS4. The thioesterase gloN/GLHYD exclusively interacts with gloL/GLPKS4 to maintain turnover of the polyketide side chain. The 10R,12S-dimethylmyristic acid is then transferred to the first thiolation domain of the nonribosomal peptide synthetase gloA/GLNRPS4 by the acyl-AMP ligase gloD/GLligase, followed by its acylation to L-ornithine to trigger elongation of the cyclic hexapeptide. L-ornithine, 4R-hydroxyl-L-proline (generated from L-proline by the dioxygenase gloF/GLOXY2), 3S-hydroxyl-L-homotyrosine (generated by gloG/GLHtyB, gloH/GLHtyA, gloI/GLHtyC, gloJ/GLHtyD and hydroxylated at C-3 by the dioxygenase gloM/GLOXY1), 3R-hydroxyl-L-glutamine (generated from L-glutamine probably by the dioxygenase gloE/GLOXY3) and 3S-hydroxyl-L-proline (generated from L-proline by the dioxygenase gloF/GLOXY2 to yield pneumocandin B0), or 3S-hydroxyl-4S-methyl-L-proline (generated from L-leucine by the dioxygenase gloC/GLOXY4 to yield pneumocandin A0) are sequentially added to the growing chain. The last C domain of gloA/GLNRPS4 is proposed to be responsible for cyclization by condensation to form the peptide bond between L-ornithine and 3S-hydroxyl-4S-methyl-L-proline (for pneumocandin A0) or 3S-hydroxyl-L-proline (for pneumocandin B0). Finally, the subsequent C-4 hydroxylation of 3S-hydroxyl-L-homotyrosine and L-ornithine dihydroxylation at C-4 and C-5 are performed by the cytochrome P450 monooxygenases gloP/GLP450-1 and gloO/GLP450-2, respectively. This Glarea lozoyensis (strain ATCC 20868 / MF5171) protein is 3-isopropylmalate dehydratase large subunit gloJ.